We begin with the raw amino-acid sequence, 576 residues long: Keratin, type II cytoskeletal 5 (576 aa).

Residues 1 to 163 form a head region; sequence MSRQSSVSFR…DPTIQRVRTE (163 aa). Ser5, Ser8, Ser16, and Ser21 each carry phosphoserine. Residue Thr24 is modified to Phosphothreonine; by CDK1. Residues Ser26, Ser36, Ser46, Ser60, Ser67, Ser71, Ser74, and Ser78 each carry the phosphoserine modification. Thr147 is subject to Phosphothreonine; by CDK1. Thr162 is modified (phosphothreonine; by AURKB). The coil 1A stretch occupies residues 164-199; that stretch reads EREQIKTLNNKFASFIDKVRFLEQQNKVLDTKWTLL. An IF rod domain is found at 164–477; that stretch reads EREQIKTLNN…KLLEGEECRL (314 aa). A linker 1 region spans residues 200-218; sequence QEQGTKTIKQNLDPLFEQY. A coil 1B region spans residues 219-311; that stretch reads INNLRRQLDG…FFDAELSQMQ (93 aa). Positions 312 to 334 are linker 12; the sequence is THVSDTSVVLSMDNNRSLDLDSI. A coil 2 region spans residues 335 to 473; the sequence is IAEVKAQYED…ATYRKLLEGE (139 aa). A tail region spans residues 474 to 576; that stretch reads ECRLSGEGVG…TSSSRRSFKS (103 aa). Position 527 is an omega-N-methylarginine (Arg527). Positions 540–557 are enriched in gly residues; the sequence is GFSASSGQGGGFSSGGGS. The segment at 540–576 is disordered; sequence GFSASSGQGGGFSSGGGSSSSVKFVSTTSSSRRSFKS. A compositionally biased stretch (low complexity) spans 558–576; sequence SSSVKFVSTTSSSRRSFKS.

The protein belongs to the intermediate filament family. In terms of assembly, heterodimer of a type I and a type II keratin. Heterodimer with type I keratin KRT25 leading to the formation of keratin intermediate filament (KIF) network. Forms a heterodimer (via 2B domains) with KRT14 (via 2B domains). Interacts with TCHP. Interacts with EPPK1. Interacts with AMELX. Interacts with PKP1 (via N-terminus) and PKP2. In terms of processing, phosphorylated by CDK1, AURKB and Rho-kinase, phosphorylation is regulated by the cell cycle. Thr-24 phosphorylation, mediated by CDK1, peaks during prometaphase or metaphase cells with phosphorylated filamentous structures evident throughout the cytoplasm during early mitosis. CDK1 phosphorylates Thr-24 in mitotic cells at the site of injury. O-glycosylated. As to expression, expressed in the epidermis (at protein level) and testis (within pachytene spermatocytes).

Its subcellular location is the cytoplasm. Its function is as follows. Required for the formation of keratin intermediate filaments in the basal epidermis and maintenance of the skin barrier in response to mechanical stress. Regulates the recruitment of Langerhans cells to the epidermis, potentially by modulation of the abundance of macrophage chemotactic cytokines, macrophage inflammatory cytokines and CTNND1 localization in keratinocytes. This is Keratin, type II cytoskeletal 5 from Rattus norvegicus (Rat).